Reading from the N-terminus, the 350-residue chain is Guanine nucleotide-binding protein G(t) subunit alpha-1 (350 aa).

Residues Met-1–Glu-21 form a disordered region. The N-myristoyl glycine moiety is linked to residue Gly-2. The segment covering Ala-7–Glu-21 has biased composition (basic and acidic residues). The G-alpha domain occupies Arg-28–Phe-350. A G1 motif region spans residues Lys-31 to Thr-44. Gly-36–Ser-43 provides a ligand contact to GTP. Residue Ser-43 participates in Mg(2+) binding. Tyr-142 bears the Phosphotyrosine mark. Residues Asp-146, Leu-171–Thr-177, Gly-199, Asn-265–Asp-268, and Ala-322 each bind GTP. Positions Asp-169–Thr-177 are G2 motif. Thr-177 is a binding site for Mg(2+). A G3 motif region spans residues Phe-192–Arg-201. The interval Val-261–Asp-268 is G4 motif. The segment at Thr-320 to Thr-325 is G5 motif. An interaction with RHO region spans residues Ile-340 to Phe-350.

As to quaternary structure, heterotrimeric G proteins are composed of 3 subunits alpha, beta and gamma. The alpha chain contains the guanine nucleotide binding site. Interacts with RHO. Interacts with RGS9 and PDE6G. Interacts (when myristoylated) with UNC119; interaction is required for localization in sensory neurons. Rod.

The protein localises to the cell projection. It is found in the cilium. It localises to the photoreceptor outer segment. Its subcellular location is the membrane. The protein resides in the photoreceptor inner segment. Functions as a signal transducer for the rod photoreceptor RHO. Required for normal RHO-mediated light perception by the retina. Guanine nucleotide-binding proteins (G proteins) function as transducers downstream of G protein-coupled receptors (GPCRs), such as the photoreceptor RHO. The alpha chain contains the guanine nucleotide binding site and alternates between an active, GTP-bound state and an inactive, GDP-bound state. Activated RHO promotes GDP release and GTP binding. Signaling is mediated via downstream effector proteins, such as cGMP-phosphodiesterase. The protein is Guanine nucleotide-binding protein G(t) subunit alpha-1 (GNAT1) of Bos taurus (Bovine).